We begin with the raw amino-acid sequence, 374 residues long: Putative glutamate--cysteine ligase 2-2 (374 aa).

Belongs to the glutamate--cysteine ligase type 2 family. YbdK subfamily.

It carries out the reaction L-cysteine + L-glutamate + ATP = gamma-L-glutamyl-L-cysteine + ADP + phosphate + H(+). ATP-dependent carboxylate-amine ligase which exhibits weak glutamate--cysteine ligase activity. In Rhodococcus jostii (strain RHA1), this protein is Putative glutamate--cysteine ligase 2-2.